A 159-amino-acid chain; its full sequence is MNVTTTRFGEIAVEEAKIITLPDGMLGFSEKRFVLLTPQNITPFCWLQSVENPELAFVVVDTKECASDYAVKLTAEESEKLCVNDGDEVVLLAVVTMASDPFNITVNLQGPIALNPKRMLAKQIVLEGSRYTTKHPFFDQAARSKAPGKRNASGEVTAA.

Belongs to the FliW family. As to quaternary structure, interacts with translational regulator CsrA and flagellin(s).

It localises to the cytoplasm. Its function is as follows. Acts as an anti-CsrA protein, binds CsrA and prevents it from repressing translation of its target genes, one of which is flagellin. Binds to flagellin and participates in the assembly of the flagellum. The sequence is that of Flagellar assembly factor FliW from Geobacter sulfurreducens (strain ATCC 51573 / DSM 12127 / PCA).